The chain runs to 598 residues: Arginine--tRNA ligase (598 aa).

Positions Ala139–His149 match the 'HIGH' region motif.

The protein belongs to the class-I aminoacyl-tRNA synthetase family. As to quaternary structure, monomer.

The protein resides in the cytoplasm. It catalyses the reaction tRNA(Arg) + L-arginine + ATP = L-arginyl-tRNA(Arg) + AMP + diphosphate. The protein is Arginine--tRNA ligase of Bradyrhizobium sp. (strain ORS 278).